A 329-amino-acid chain; its full sequence is D-alanine--D-alanine ligase (329 aa).

The ATP-grasp domain maps to 120–326; the sequence is KLWLSAIGIP…FAHYLEQILR (207 aa). 150-205 contacts ATP; it reads ALAKWGKVFIKAASQGSSVGCYSASNETDLLQGIKDAFGYSEQVLIEKAVKPRELE. Mg(2+) contacts are provided by aspartate 280, glutamate 293, and asparagine 295.

Belongs to the D-alanine--D-alanine ligase family. Mg(2+) is required as a cofactor. It depends on Mn(2+) as a cofactor.

The protein localises to the cytoplasm. It carries out the reaction 2 D-alanine + ATP = D-alanyl-D-alanine + ADP + phosphate + H(+). It functions in the pathway cell wall biogenesis; peptidoglycan biosynthesis. Its function is as follows. Cell wall formation. In Aeromonas salmonicida (strain A449), this protein is D-alanine--D-alanine ligase.